The sequence spans 875 residues: MSKSTAEIRQAFLDFFHSKGHQVVDSSSLVPNNDPTLLFTNAGMNQFKDVFLGLDKRSYVRATTSQRCVRAGGKHNDLENVGYTARHHTFFEMLGNFSFGDYFKHDAIRYAWELLTSPQWFNLPKEKLWVTVYATDDEAYGIWADEVGVPRERIIRIGDNKGGPYASDNFWQMGETGPCGPCTEIFFDHGEHIAGGPPGSPDEDGDRYIEIWNLVFMQFNRQVDGTMLPLPKPSVDTGMGLERVSAVLQHVNSNYDIDLFKTLIDAVAKAVGTTDLTNKSLRVIADHIRSCAFLISDGVMPSNENRGYVLRRIIRRAARHGNMLGATDAFFYKLVAPLIEVMGPAAEELKKQQSVVEQALKMEEEQFARTLERGLSLLDEEIKNLKGDTLDGETAFRLYDTYGFPVDLTADVCRERGLKVDEEGFEAAMTAQRQRARDASGFGVDYNSLIRVDENTPFCGYEKTQQQAKVIALYHNGNAVDQIAAGDEAVVILNETPFYGESGGQVGDQGELKNAGVSFAVQDTQKYGQAIGHVGKLTQGMLRVNDSVDANVDSQRRDRIRLNHSATHLLHAALRQVLGVHVAQKGSLVNDSYLRFDFSHTEAMKPEQIRQVEDIVNAQIRRNLTVQTDVMALDDARAKGAMALFGEKYDDHVRVLSMGDFSIELCGGTHASRTGDIGLFQIISESGTAAGVRRIEATTGENALSALHRQSDVLQDIAQLLKGDSHNLTDKVRSVLDRSRALEKELQQLKAQQAAQESSSLSGKATEINGVKLLVTQLDNVDPKLLRTMVDDLKNQLGSAVIVLGTAAEGRVSLISGVTKDLTDRVKAGELVGFVAQQVGGKGGGRPDMAQAGGSDVSALPAALASVESWVAAKL.

Positions 564, 568, 666, and 670 each coordinate Zn(2+).

It belongs to the class-II aminoacyl-tRNA synthetase family. As to quaternary structure, homotetramer. It depends on Zn(2+) as a cofactor.

Its subcellular location is the cytoplasm. The enzyme catalyses tRNA(Ala) + L-alanine + ATP = L-alanyl-tRNA(Ala) + AMP + diphosphate. Its function is as follows. Catalyzes the attachment of alanine to tRNA(Ala) in a two-step reaction: alanine is first activated by ATP to form Ala-AMP and then transferred to the acceptor end of tRNA(Ala). Also edits incorrectly charged Ser-tRNA(Ala) and Gly-tRNA(Ala) via its editing domain. The sequence is that of Alanine--tRNA ligase from Pectobacterium atrosepticum (strain SCRI 1043 / ATCC BAA-672) (Erwinia carotovora subsp. atroseptica).